The primary structure comprises 326 residues: Tagatose 1,6-diphosphate aldolase (326 aa).

It belongs to the aldolase LacD family.

The enzyme catalyses D-tagatofuranose 1,6-bisphosphate = D-glyceraldehyde 3-phosphate + dihydroxyacetone phosphate. It functions in the pathway carbohydrate metabolism; D-tagatose 6-phosphate degradation; D-glyceraldehyde 3-phosphate and glycerone phosphate from D-tagatose 6-phosphate: step 2/2. The protein is Tagatose 1,6-diphosphate aldolase of Staphylococcus aureus (strain Mu3 / ATCC 700698).